The sequence spans 347 residues: Gas vesicle ATPase GvpN (347 aa).

The segment at 1–50 (MTNSSRERKVRGSQIRTSRREKQDKNARNRTEKELTRLENHQTHRTKNGT) is disordered. Over residues 18 to 42 (SRREKQDKNARNRTEKELTRLENHQ) the composition is skewed to basic and acidic residues. Position 91–98 (91–98 (GPTGCGKT)) interacts with ATP.

This sequence belongs to the CbbQ/NirQ/NorQ/GpvN family. Forms homodimers, a GvpN-GvpO heterodimer, interacts with GvpC and GvpL, might interact with GvpA.

The protein localises to the gas vesicle. Its subcellular location is the cytoplasm. It carries out the reaction ATP + H2O = ADP + phosphate + H(+). In terms of biological role, an ATPase that functions in gas vesicle formation. A minor component of the gas vesicle, also found in soluble extracts. Gas vesicles are hollow, gas filled proteinaceous nanostructures found in some microorganisms. They allow positioning of halobacteria at the optimal depth for growth in the poorly aerated, shallow brine pools of their habitat. Functionally, expression of a 9.5 kb mc-vac DNA fragment containing 2 divergently transcribed regions (gvpD-gvpE-gvpF-gvpG-gvpH-gvpI-gvpJ-gvpK-gvpL-gvpM and gvpA-gvpC-gvpN-gvpO) allows H.volcanii to produce gas vesicles. The sequence is that of Gas vesicle ATPase GvpN from Haloferax mediterranei (strain ATCC 33500 / DSM 1411 / JCM 8866 / NBRC 14739 / NCIMB 2177 / R-4) (Halobacterium mediterranei).